The following is a 281-amino-acid chain: MASNQELVQIATNFLLNAPPCEFMEVVSDVRALLPSESLLNASAGSTFREYNTSQMVSVQTSKGSALITKEGEISNNEYLDPKNKQVITYDHIKQEVTGERSASGEIEQDIEQYRAAFDEEATKYCNEYYPNGVSAVYGTKVSEGIKITVCISTCIYKPNAFYSGRWRSVWTCTFKPGSGNVTSNGKVQVNVHYFEDGNVQLNTVTQKQTTSPSADAQSTAVNAFKAIGKAELNLHTALDNNYSTMGDTTFKALRRALPINRTKINWQKVKNFKIANELNK.

This sequence belongs to the F-actin-capping protein alpha subunit family. As to quaternary structure, component of the F-actin capping complex, composed of a heterodimer of an alpha and a beta subunit.

It localises to the cytoplasm. It is found in the cytoskeleton. Its function is as follows. F-actin-capping proteins bind in a Ca(2+)-independent manner to the fast growing ends of actin filaments (barbed end) thereby blocking the exchange of subunits at these ends. Unlike other capping proteins (such as gelsolin and severin), these proteins do not sever actin filaments. The chain is F-actin-capping protein subunit alpha (acpB) from Dictyostelium discoideum (Social amoeba).